A 358-amino-acid polypeptide reads, in one-letter code: Replication-associated protein (358 aa).

The CRESS-DNA virus Rep endonuclease domain occupies 8–116 (RIQAKNIFLT…DGDTIEWGEF (109 aa)). The RCR-1 motif lies at 15 to 18 (FLTY). A divalent metal cation contacts are provided by Glu-49, His-57, and His-59. An RCR-2 motif is present at residues 57-59 (HLH). The active-site For DNA cleavage activity is the Tyr-103. An RCR-3 motif is present at residues 103–106 (YVDK). Asp-107 provides a ligand contact to a divalent metal cation. Positions 143 to 153 (LEQALQILKEE) are binding to RBR1. Residues 156 to 176 (KDYFLQHHNLLNNAQKIFQRA) are oligomerization. 222–229 (GDSRTGKT) lines the ATP pocket.

This sequence belongs to the geminiviridae Rep protein family. As to quaternary structure, homooligomer. Interacts with the replication enhancer protein (REn). Interacts with host retinoblastoma-related protein 1 (RBR1), and may thereby induce the transcription of host replicative enzymes even if the cell is not dividing anymore. Interacts with host PCNA. Interacts with host SCE1 protein. Mg(2+) serves as cofactor. Mn(2+) is required as a cofactor.

The protein localises to the host nucleus. Its function is as follows. Essential for the replication of viral ssDNA. The closed circular ssDNA genome is first converted to a superhelical dsDNA. Rep binds a specific region at the genome origin of replication. It introduces an endonucleolytic nick within the conserved sequence 5'-TAATATTAC-3' in the intergenic region of the genome present in all geminiviruses, thereby initiating the rolling circle replication (RCR). Following cleavage, binds covalently to the 5'-phosphate of DNA as a tyrosyl ester. The cleavage gives rise to a free 3'-OH that serves as a primer for the cellular DNA polymerase. The polymerase synthesizes the (+) strand DNA by rolling circle mechanism. After one round of replication, a Rep-catalyzed nucleotidyl transfer reaction releases a circular single-stranded virus genome, thereby terminating the replication. Displays origin-specific DNA cleavage, nucleotidyl transferase, ATPase and helicase activities. The chain is Replication-associated protein from Beet curly top virus (strain California/Logan) (BCTV).